The following is a 126-amino-acid chain: MWWSVLAVSVGAVIGANLRWGLGLWLNASYHAVPWGTLVANLSGGWLIGVLMAFFSQSSVLSPEWRLFAVTGLCGALTTFSTFSLEMFAALQEGKWGMALVGILAHVVGSILMTALGFLTFSLVRG.

The next 4 helical transmembrane spans lie at V5–W25, W35–F55, F68–F88, and A99–L119. G75 and T78 together coordinate Na(+).

This sequence belongs to the fluoride channel Fluc/FEX (TC 1.A.43) family.

It localises to the cell inner membrane. It carries out the reaction fluoride(in) = fluoride(out). Its activity is regulated as follows. Na(+) is not transported, but it plays an essential structural role and its presence is essential for fluoride channel function. Fluoride-specific ion channel. Important for reducing fluoride concentration in the cell, thus reducing its toxicity. This Marinobacter nauticus (strain ATCC 700491 / DSM 11845 / VT8) (Marinobacter aquaeolei) protein is Fluoride-specific ion channel FluC.